The primary structure comprises 520 residues: Chaperone Ric-8B (520 aa).

Phosphoserine is present on Ser468. Residue Thr473 is modified to Phosphothreonine.

This sequence belongs to the synembryn family. In terms of assembly, interacts with GDP-bound G(s) G-alpha proteins GNAL and GNAS. Does not interact with G-alpha proteins when they are in complex with subunits beta and gamma. In terms of tissue distribution, predominantly expressed in the mature olfactory sensory neurons and also in a few regions in the brain.

The protein resides in the cytoplasm. Its subcellular location is the cell cortex. Chaperone that specifically binds and folds nascent G(s) G-alpha proteins (GNAS and GNAL) prior to G protein heterotrimer formation, promoting their association with the plasma membrane. Also acts as a guanine nucleotide exchange factor (GEF) for G(s) proteins by stimulating exchange of bound GDP for free GTP. Acts as an important component for odorant signal transduction by mediating GNAL (G(olf)-alpha) folding, thereby promoting-dependent cAMP accumulation in olfactory sensory neurons. The sequence is that of Chaperone Ric-8B from Mus musculus (Mouse).